The following is a 211-amino-acid chain: uncharacterized protein (211 aa).

At 1-33 the chain is on the cytoplasmic side; the sequence is MQNGTEDKSNIPARSNDDVLPPLAVRLTMKVMR. Residues 34–54 traverse the membrane as a helical segment; it reads LIFIGKMFAYSFVPFPPFKLL. Over 55–58 the chain is Lumenal; it reads TFDN. A helical membrane pass occupies residues 59–79; it reads TVGWFVAYSAIVSIWGFAVWM. At 80–116 the chain is on the cytoplasmic side; it reads ERGYRHKINLLPPRCTKIRCSRCNTRIRSPNWFKYKN. A helical transmembrane segment spans residues 117–137; that stretch reads WLYFFLLYVSLTTSNLIIQLA. Residues 138–162 lie on the Lumenal side of the membrane; it reads SFMTEMSRRGISVPGTKDPGKRDYL. Residues 163-183 form a helical membrane-spanning segment; the sequence is GLIIPMRFIGAFIHYMTANLF. Residues 184–211 are Cytoplasmic-facing; the sequence is KEYYLHNGPLEKNDRPSTDEKTSENETL.

The protein localises to the endoplasmic reticulum membrane. This is an uncharacterized protein from Saccharomyces cerevisiae (strain ATCC 204508 / S288c) (Baker's yeast).